Here is a 372-residue protein sequence, read N- to C-terminus: MKLLSLHVQDFRNLAAVELAPSPRATVLLGENGQGKTNLLEAIYFLTTLKPLRAVRLAELVRFGAEQGAVAGDFEGPGGVRRVAVQVAAGGRTATLDGKALGSGARLDDYFEGLASVCFSPDDLLLVKAGPDGRRRFLDRAAFNRWPAVLGEAREYVRALRARNAALRAGPAEVEASFREPLVRAGARILVRRRDLVAELAPRLQAAFAEISGPAAPEAHLAYRAAGGVDVEHPEAEVAARLAHALEARLERDREKGFTSAGPHMDDLVLALGGKGARLYGSQGQQRALVLALKIAEIENLRAALGRPPLLLLDDVSSELDPAKNRFLLGYLAALPAQAFLTSTDRRLIEPAAGPDTAFFEVRSGVVSPLVS.

An ATP-binding site is contributed by 30–37; the sequence is GENGQGKT.

The protein belongs to the RecF family.

The protein resides in the cytoplasm. The RecF protein is involved in DNA metabolism; it is required for DNA replication and normal SOS inducibility. RecF binds preferentially to single-stranded, linear DNA. It also seems to bind ATP. This Anaeromyxobacter dehalogenans (strain 2CP-1 / ATCC BAA-258) protein is DNA replication and repair protein RecF.